The following is a 147-amino-acid chain: Ribonuclease pancreatic gamma-type (147 aa).

Residues 1–25 (MGLEKSFLLFSLLVLVLGWVQPSLG) form the signal peptide. The substrate site is built by Lys-35 and Arg-38. His-40 acts as the Proton acceptor in catalysis. Cystine bridges form between Cys-54–Cys-112, Cys-68–Cys-123, Cys-86–Cys-138, and Cys-93–Cys-100. Substrate is bound by residues 69–73 (KPMNT), Lys-94, and Arg-113. His-142 (proton donor) is an active-site residue.

Belongs to the pancreatic ribonuclease family. As to quaternary structure, monomer.

Its subcellular location is the secreted. The enzyme catalyses an [RNA] containing cytidine + H2O = an [RNA]-3'-cytidine-3'-phosphate + a 5'-hydroxy-ribonucleotide-3'-[RNA].. It catalyses the reaction an [RNA] containing uridine + H2O = an [RNA]-3'-uridine-3'-phosphate + a 5'-hydroxy-ribonucleotide-3'-[RNA].. In terms of biological role, endonuclease that catalyzes the cleavage of RNA on the 3' side of pyrimidine nucleotides. Acts on single-stranded and double-stranded RNA. The polypeptide is Ribonuclease pancreatic gamma-type (Rattus rattus (Black rat)).